The following is a 357-amino-acid chain: Glycerol-1-phosphate dehydrogenase [NAD(P)+] (357 aa).

Residues 104–108 (GKTID) and 126–129 (TAAS) each bind NAD(+). Aspartate 131 contacts substrate. NAD(+) is bound at residue serine 135. Substrate is bound at residue aspartate 178. Residues aspartate 178 and histidine 258 each contribute to the Zn(2+) site. Histidine 262 serves as a coordination point for substrate. Residue histidine 274 participates in Zn(2+) binding.

It belongs to the glycerol-1-phosphate dehydrogenase family. It depends on Zn(2+) as a cofactor.

Its subcellular location is the cytoplasm. The enzyme catalyses sn-glycerol 1-phosphate + NAD(+) = dihydroxyacetone phosphate + NADH + H(+). It catalyses the reaction sn-glycerol 1-phosphate + NADP(+) = dihydroxyacetone phosphate + NADPH + H(+). It functions in the pathway membrane lipid metabolism; glycerophospholipid metabolism. Functionally, catalyzes the NAD(P)H-dependent reduction of dihydroxyacetonephosphate (DHAP or glycerone phosphate) to glycerol 1-phosphate (G1P). The G1P thus generated is used as the glycerophosphate backbone of phospholipids in the cellular membranes of Archaea. The polypeptide is Glycerol-1-phosphate dehydrogenase [NAD(P)+] (Methanococcoides burtonii (strain DSM 6242 / NBRC 107633 / OCM 468 / ACE-M)).